We begin with the raw amino-acid sequence, 204 residues long: Peptide deformylase (204 aa).

Residues C131 and H174 each contribute to the Fe cation site. Residue E175 is part of the active site. Fe cation is bound at residue H178.

This sequence belongs to the polypeptide deformylase family. Requires Fe(2+) as cofactor.

The catalysed reaction is N-terminal N-formyl-L-methionyl-[peptide] + H2O = N-terminal L-methionyl-[peptide] + formate. In terms of biological role, removes the formyl group from the N-terminal Met of newly synthesized proteins. Requires at least a dipeptide for an efficient rate of reaction. N-terminal L-methionine is a prerequisite for activity but the enzyme has broad specificity at other positions. This is Peptide deformylase from Streptococcus equi subsp. zooepidemicus (strain H70).